A 595-amino-acid polypeptide reads, in one-letter code: DNA-binding protein REB1 (595 aa).

2 stretches are compositionally biased toward basic and acidic residues: residues Lys-25–Asp-46 and Asp-54–Asn-71. Residues Lys-25–Val-208 are disordered. Residues Ala-75–Ala-84 show a composition bias toward low complexity. The span at Lys-114 to Leu-123 shows a compositional bias: basic residues. Residues Asn-163–Asn-176 show a composition bias toward polar residues. Residues Glu-182 to Asp-205 show a composition bias toward basic and acidic residues. Residues His-333 to Cys-384 enclose the HTH myb-type domain. The segment at residues Trp-360–Val-382 is a DNA-binding region (H-T-H motif). The Myb-like domain maps to Gly-385–Leu-490. The tract at residues Thr-414–Lys-456 is disordered. The segment covering Ser-434–Gln-443 has biased composition (acidic residues).

It localises to the nucleus. DNA-binding protein that recognizes sites within both the enhancer and the promoter of rRNA transcription, as well as upstream of many genes transcribed by RNA polymerase II. It is essential for cell growth. May stimulate or inhibit transcription. Specifically recognizes the sequence 5'-CCGGGTA-3' or 5'-CGGGTRR-3' (where R is any purine). This Kluyveromyces lactis (strain ATCC 8585 / CBS 2359 / DSM 70799 / NBRC 1267 / NRRL Y-1140 / WM37) (Yeast) protein is DNA-binding protein REB1 (REB1).